Consider the following 378-residue polypeptide: 3-dehydroquinate synthase (378 aa).

Residues 111–115 (GVIGD), 135–136 (TS), Lys-148, and Lys-157 contribute to the NAD(+) site. 3 residues coordinate Zn(2+): Glu-190, His-252, and His-271.

Belongs to the sugar phosphate cyclases superfamily. Dehydroquinate synthase family. The cofactor is NAD(+). Co(2+) serves as cofactor. Zn(2+) is required as a cofactor.

The protein localises to the cytoplasm. It catalyses the reaction 7-phospho-2-dehydro-3-deoxy-D-arabino-heptonate = 3-dehydroquinate + phosphate. It functions in the pathway metabolic intermediate biosynthesis; chorismate biosynthesis; chorismate from D-erythrose 4-phosphate and phosphoenolpyruvate: step 2/7. Catalyzes the conversion of 3-deoxy-D-arabino-heptulosonate 7-phosphate (DAHP) to dehydroquinate (DHQ). The polypeptide is 3-dehydroquinate synthase (Mesorhizobium japonicum (strain LMG 29417 / CECT 9101 / MAFF 303099) (Mesorhizobium loti (strain MAFF 303099))).